Reading from the N-terminus, the 638-residue chain is Neuroendocrine convertase 2 (638 aa).

Residues 1-25 (MKGGCVSQWKAAAGFLFCVMVFASA) form the signal peptide. Positions 26 to 109 (ERPVFTNHFL…QQEGFDRKKR (84 aa)) are excised as a propeptide. The region spanning 129-453 (QWYLINTGQA…YGVLDAGAMV (325 aa)) is the Peptidase S8 domain. Catalysis depends on charge relay system residues Asp167 and His208. Disulfide bonds link Cys225-Cys376 and Cys317-Cys347. The N-linked (GlcNAc...) asparagine glycan is linked to Asn375. Catalysis depends on Ser384, which acts as the Charge relay system. The P/Homo B domain occupies 461-597 (TVPERFHCVG…TLMLHGTQSA (137 aa)). Residues Cys468 and Cys494 are joined by a disulfide bond. Residues Asn514 and Asn524 are each glycosylated (N-linked (GlcNAc...) asparagine).

Belongs to the peptidase S8 family. Furin subfamily.

The protein localises to the cytoplasmic vesicle. It is found in the secretory vesicle. The protein resides in the secreted. The catalysed reaction is Release of protein hormones and neuropeptides from their precursors, generally by hydrolysis of -Lys-Arg-|- bonds.. Functionally, serine endopeptidase which is involved in the processing of hormone and other protein precursors at sites comprised of pairs of basic amino acid residues. Responsible for the release of glucagon from proglucagon in pancreatic A cells. The chain is Neuroendocrine convertase 2 (PCSK2) from Homo sapiens (Human).